The following is an 802-amino-acid chain: Phenylalanine--tRNA ligase beta subunit (802 aa).

In terms of domain architecture, tRNA-binding spans 40–155 (SASLKNVVVG…AHVETGVSAI (116 aa)). The B5 domain maps to 409–484 (KAVNKIETSL…RIYGYDEIPV (76 aa)). Residues Asp462, Asp468, Glu471, and Glu472 each coordinate Mg(2+). One can recognise an FDX-ACB domain in the interval 709 to 802 (PRYPEMTRDL…LQEKLHAIIR (94 aa)).

It belongs to the phenylalanyl-tRNA synthetase beta subunit family. Type 1 subfamily. As to quaternary structure, tetramer of two alpha and two beta subunits. The cofactor is Mg(2+).

The protein resides in the cytoplasm. The catalysed reaction is tRNA(Phe) + L-phenylalanine + ATP = L-phenylalanyl-tRNA(Phe) + AMP + diphosphate + H(+). This chain is Phenylalanine--tRNA ligase beta subunit, found in Listeria monocytogenes serotype 4b (strain F2365).